The primary structure comprises 310 residues: Porphobilinogen deaminase (310 aa).

Position 236 is an S-(dipyrrolylmethanemethyl)cysteine (C236).

It belongs to the HMBS family. In terms of assembly, monomer. The cofactor is dipyrromethane.

It carries out the reaction 4 porphobilinogen + H2O = hydroxymethylbilane + 4 NH4(+). The protein operates within porphyrin-containing compound metabolism; protoporphyrin-IX biosynthesis; coproporphyrinogen-III from 5-aminolevulinate: step 2/4. Its function is as follows. Tetrapolymerization of the monopyrrole PBG into the hydroxymethylbilane pre-uroporphyrinogen in several discrete steps. This Nitratiruptor sp. (strain SB155-2) protein is Porphobilinogen deaminase.